A 249-amino-acid chain; its full sequence is Metallo-beta-lactamase type 2 (249 aa).

Positions 1-22 (MLKKIKISLILALGLTSLQAFG) are cleaved as a signal peptide. H98, H100, D102, H161, and C180 together coordinate Zn(2+). Substrate is bound at residue K183. H222 serves as a coordination point for Zn(2+).

The protein belongs to the metallo-beta-lactamase superfamily. Class-B beta-lactamase family. As to quaternary structure, monomer. The cofactor is Zn(2+).

The protein localises to the periplasm. It catalyses the reaction a beta-lactam + H2O = a substituted beta-amino acid. Confers resistance to the different beta-lactams antibiotics (penicillin, cephalosporin and carbapenem) via the hydrolysis of the beta-lactam ring. This Elizabethkingia meningoseptica (Chryseobacterium meningosepticum) protein is Metallo-beta-lactamase type 2 (blaB3).